The sequence spans 301 residues: ATP synthase gamma chain (301 aa).

This sequence belongs to the ATPase gamma chain family. As to quaternary structure, F-type ATPases have 2 components, CF(1) - the catalytic core - and CF(0) - the membrane proton channel. CF(1) has five subunits: alpha(3), beta(3), gamma(1), delta(1), epsilon(1). CF(0) has three main subunits: a, b and c.

The protein localises to the cell inner membrane. Produces ATP from ADP in the presence of a proton gradient across the membrane. The gamma chain is believed to be important in regulating ATPase activity and the flow of protons through the CF(0) complex. The protein is ATP synthase gamma chain of Bordetella avium (strain 197N).